The sequence spans 92 residues: DNA-directed RNA polymerase subunit Rpo11 (92 aa).

This sequence belongs to the archaeal Rpo11/eukaryotic RPB11/RPC19 RNA polymerase subunit family. As to quaternary structure, part of the 13-subunit RNA polymerase complex.

It localises to the cytoplasm. The catalysed reaction is RNA(n) + a ribonucleoside 5'-triphosphate = RNA(n+1) + diphosphate. Its function is as follows. DNA-dependent RNA polymerase (RNAP) catalyzes the transcription of DNA into RNA using the four ribonucleoside triphosphates as substrates. This is DNA-directed RNA polymerase subunit Rpo11 from Saccharolobus shibatae (strain ATCC 51178 / DSM 5389 / JCM 8931 / NBRC 15437 / B12) (Sulfolobus shibatae).